The chain runs to 209 residues: Protein GrpE (209 aa).

The interval 1–63 (MKKSRKKENM…NPEEACREEN (63 aa)) is disordered. Basic and acidic residues-rich tracts occupy residues 7 to 42 (KENMDSKERNQKEAERSEARNSESPAEKAGETKVSP) and 50 to 63 (EAEKNPEEACREEN).

Belongs to the GrpE family. In terms of assembly, homodimer.

The protein localises to the cytoplasm. Functionally, participates actively in the response to hyperosmotic and heat shock by preventing the aggregation of stress-denatured proteins, in association with DnaK and GrpE. It is the nucleotide exchange factor for DnaK and may function as a thermosensor. Unfolded proteins bind initially to DnaJ; upon interaction with the DnaJ-bound protein, DnaK hydrolyzes its bound ATP, resulting in the formation of a stable complex. GrpE releases ADP from DnaK; ATP binding to DnaK triggers the release of the substrate protein, thus completing the reaction cycle. Several rounds of ATP-dependent interactions between DnaJ, DnaK and GrpE are required for fully efficient folding. The sequence is that of Protein GrpE from Methanosarcina mazei (strain ATCC BAA-159 / DSM 3647 / Goe1 / Go1 / JCM 11833 / OCM 88) (Methanosarcina frisia).